Here is a 226-residue protein sequence, read N- to C-terminus: 2-C-methyl-D-erythritol 4-phosphate cytidylyltransferase (226 aa).

Belongs to the IspD/TarI cytidylyltransferase family. IspD subfamily.

It catalyses the reaction 2-C-methyl-D-erythritol 4-phosphate + CTP + H(+) = 4-CDP-2-C-methyl-D-erythritol + diphosphate. The protein operates within isoprenoid biosynthesis; isopentenyl diphosphate biosynthesis via DXP pathway; isopentenyl diphosphate from 1-deoxy-D-xylulose 5-phosphate: step 2/6. Catalyzes the formation of 4-diphosphocytidyl-2-C-methyl-D-erythritol from CTP and 2-C-methyl-D-erythritol 4-phosphate (MEP). The sequence is that of 2-C-methyl-D-erythritol 4-phosphate cytidylyltransferase from Prochlorococcus marinus (strain MIT 9312).